We begin with the raw amino-acid sequence, 156 residues long: Peptide methionine sulfoxide reductase MsrA (156 aa).

Residue C10 is part of the active site.

Belongs to the MsrA Met sulfoxide reductase family.

It carries out the reaction L-methionyl-[protein] + [thioredoxin]-disulfide + H2O = L-methionyl-(S)-S-oxide-[protein] + [thioredoxin]-dithiol. The enzyme catalyses [thioredoxin]-disulfide + L-methionine + H2O = L-methionine (S)-S-oxide + [thioredoxin]-dithiol. In terms of biological role, has an important function as a repair enzyme for proteins that have been inactivated by oxidation. Catalyzes the reversible oxidation-reduction of methionine sulfoxide in proteins to methionine. The sequence is that of Peptide methionine sulfoxide reductase MsrA from Metamycoplasma arthritidis (strain 158L3-1) (Mycoplasma arthritidis).